A 75-amino-acid polypeptide reads, in one-letter code: Porwaprin-d (75 aa).

Residues Met-1 to Ser-24 form the signal peptide. Residues Arg-27 to Ile-72 enclose the WAP domain. 4 disulfides stabilise this stretch: Cys-34–Cys-60, Cys-43–Cys-64, Cys-47–Cys-59, and Cys-53–Cys-68.

The protein belongs to the venom waprin family. In terms of tissue distribution, expressed by the venom gland.

The protein localises to the secreted. Its function is as follows. Damages membranes of susceptible bacteria. Has no hemolytic activity. Not toxic to mice. Does not inhibit the proteinases elastase and cathepsin G. The sequence is that of Porwaprin-d from Pseudechis porphyriacus (Red-bellied black snake).